A 136-amino-acid chain; its full sequence is Selenoprotein M (136 aa).

A signal peptide spans 1 to 19 (MWLPLPLLLGLLQLQPILS). Residues Cys-38 and Sec-41 each act as nucleophile in the active site. Residues 38–41 (CGGU) constitute a cross-link (cysteinyl-selenocysteine (Cys-Sec)). A non-standard amino acid (selenocysteine) is located at residue Sec-41. The segment at 111 to 136 (SSPDAPVPAEFKMAPARASGDTKEDL) is disordered. Residues 133–136 (KEDL) carry the Prevents secretion from ER motif.

Belongs to the selenoprotein M/F family.

It localises to the endoplasmic reticulum. Its function is as follows. May function as a thiol-disulfide oxidoreductase that participates in disulfide bond formation. In Xenopus laevis (African clawed frog), this protein is Selenoprotein M (selenom).